The sequence spans 536 residues: Austinoid biosynthesis cluster protein W (536 aa).

The signal sequence occupies residues 1 to 19 (MKHPTVALLGVGMLGCAAA). Disordered stretches follow at residues 141 to 164 (GSAPSQAAAAPSTGDSRSGLPGFP), 185 to 220 (SLPGFGGLQGSGPSQAAAAPSTGDSGSGLPGSPGFS), 261 to 302 (FGVP…ASNG), 385 to 423 (PGSAPDQGASTPAQAASFPAAGRAGNAIPSASSAPASNG), and 491 to 536 (PSPT…SSAE). The span at 195-208 (SGPSQAAAAPSTGD) shows a compositional bias: low complexity. The segment covering 209 to 220 (SGSGLPGSPGFS) has biased composition (gly residues). Low complexity-rich tracts occupy residues 287–302 (AGNAIPSASSAPASNG) and 408–423 (AGNAIPSASSAPASNG).

Its pathway is secondary metabolite biosynthesis; terpenoid biosynthesis. Functionally, part of the gene cluster that mediates the biosynthesis of calidodehydroaustin, a fungal meroterpenoid. The first step of the pathway is the synthesis of 3,5-dimethylorsellinic acid by the polyketide synthase ausA. 3,5-dimethylorsellinic acid is then prenylated by the polyprenyl transferase ausN. Further epoxidation by the FAD-dependent monooxygenase ausM and cyclization by the probable terpene cyclase ausL lead to the formation of protoaustinoid A. Protoaustinoid A is then oxidized to spiro-lactone preaustinoid A3 by the combined action of the FAD-binding monooxygenases ausB and ausC, and the dioxygenase ausE. Acid-catalyzed keto-rearrangement and ring contraction of the tetraketide portion of preaustinoid A3 by ausJ lead to the formation of preaustinoid A4. The aldo-keto reductase ausK, with the help of ausH, is involved in the next step by transforming preaustinoid A4 into isoaustinone which is in turn hydroxylated by the P450 monooxygenase ausI to form austinolide. The cytochrome P450 monooxygenase ausG modifies austinolide to austinol. Austinol is further acetylated to austin by the O-acetyltransferase ausP, which spontaneously changes to dehydroaustin. The cytochrome P450 monooxygenase ausR then converts dehydroaustin is into 7-dehydrodehydroaustin. The hydroxylation catalyzed by ausR permits the O-acetyltransferase ausQ to add an additional acetyl group to the molecule, leading to the formation of acetoxydehydroaustin. The short chain dehydrogenase ausT catalyzes the reduction of the double bond present between carbon atoms 1 and 2 to convert 7-dehydrodehydroaustin into 1,2-dihydro-7-hydroxydehydroaustin. AusQ catalyzes not only an acetylation reaction but also the addition of the PKS ausV diketide product to 1,2-dihydro-7-hydroxydehydroaustin, forming precalidodehydroaustin. Finally, the iron/alpha-ketoglutarate-dependent dioxygenase converts precalidodehydroaustin into calidodehydroaustin. The chain is Austinoid biosynthesis cluster protein W from Aspergillus calidoustus.